The following is a 337-amino-acid chain: MNITDEGTPVLILNAGGITLGTESRKTMENHDRVEENRNITKALCALINSGEGKVKAHIKNPDYILSKHGIGEDLETSFKNILPSRPLDFKQYQSYFFICVEKSQSPDVSVGKPATIATNLYMRNGASSVEMNLDAAQKFLDNIKVAGGRSPSARPSDRPGDDTQEEGHIQELAAAFFKQSKLTKKENFLFSESKNVEYKSFETKKLLQRVKEILPRTVSAFANTDGGYLFIGLDEKKQEIVGFEAKNCQPKCLESEIEKCIQQLPVTHFCEEREKIKYKCKFIEVHDSGVVCKYVCALRVERFCCAVFAAEPESWHMKDGGVKRFTIEEWIKLLMS.

Residues 147–166 (AGGRSPSARPSDRPGDDTQE) are disordered. Residues 156–166 (PSDRPGDDTQE) are compositionally biased toward basic and acidic residues.

Belongs to the Schlafen family. In terms of assembly, interacts with DNAJB6; promoting nuclear translocation and ability to promote cell-cycle arrest. As to expression, mainly expressed in the thymus, lymph node and spleen. Specifically expressed in T-lineage cells, but not in B-cells. Strongly up-regulated during the differentiation from CD4(+)CD8(+) double-positive (DP) to CD4(+) or CD8(+) single-positive (SP) thymocytes. Highly expressed in quiescent single-positive thymocytes and T-cells. The expression substantially decreases after TCR (T-cell receptor)-mediated activation.

It localises to the cytoplasm. It is found in the nucleus. Protein expressed in resting T-cells, which is required for maintaining T-cells in the quiescent state. Acts by promoting cell-cycle arrest of T-cells through inhibiting the expression of cyclin-D1 (CCND1). This is Schlafen family member 1 from Mus musculus (Mouse).